The primary structure comprises 339 residues: Dihydroorotate dehydrogenase (quinone) (339 aa).

FMN is bound by residues 62-66 (AGLDK) and Thr-86. Residue Lys-66 coordinates substrate. 111-115 (NRMGF) provides a ligand contact to substrate. FMN-binding residues include Asn-139 and Asn-172. Asn-172 provides a ligand contact to substrate. The Nucleophile role is filled by Ser-175. A substrate-binding site is contributed by Asn-177. 2 residues coordinate FMN: Lys-217 and Thr-245. 246-247 (NT) is a binding site for substrate. Residues Gly-268, Gly-297, and 318–319 (YS) each bind FMN.

It belongs to the dihydroorotate dehydrogenase family. Type 2 subfamily. As to quaternary structure, monomer. The cofactor is FMN.

The protein localises to the cell membrane. It carries out the reaction (S)-dihydroorotate + a quinone = orotate + a quinol. It functions in the pathway pyrimidine metabolism; UMP biosynthesis via de novo pathway; orotate from (S)-dihydroorotate (quinone route): step 1/1. Catalyzes the conversion of dihydroorotate to orotate with quinone as electron acceptor. This is Dihydroorotate dehydrogenase (quinone) from Shewanella amazonensis (strain ATCC BAA-1098 / SB2B).